The following is a 69-amino-acid chain: Large ribosomal subunit protein uL29 (69 aa).

Belongs to the universal ribosomal protein uL29 family.

The sequence is that of Large ribosomal subunit protein uL29 from Mycoplasmopsis agalactiae (strain NCTC 10123 / CIP 59.7 / PG2) (Mycoplasma agalactiae).